Reading from the N-terminus, the 334-residue chain is Glycerol-3-phosphate dehydrogenase [NAD(P)+] (334 aa).

NADPH contacts are provided by tryptophan 13, arginine 33, and lysine 106. Residues lysine 106, glycine 137, and serine 139 each coordinate sn-glycerol 3-phosphate. Residue alanine 141 coordinates NADPH. Residues lysine 192, aspartate 245, serine 255, arginine 256, and asparagine 257 each contribute to the sn-glycerol 3-phosphate site. Lysine 192 (proton acceptor) is an active-site residue. Residue arginine 256 participates in NADPH binding. 2 residues coordinate NADPH: valine 280 and glutamate 282.

It belongs to the NAD-dependent glycerol-3-phosphate dehydrogenase family.

It is found in the cytoplasm. It catalyses the reaction sn-glycerol 3-phosphate + NAD(+) = dihydroxyacetone phosphate + NADH + H(+). The catalysed reaction is sn-glycerol 3-phosphate + NADP(+) = dihydroxyacetone phosphate + NADPH + H(+). It functions in the pathway membrane lipid metabolism; glycerophospholipid metabolism. Its function is as follows. Catalyzes the reduction of the glycolytic intermediate dihydroxyacetone phosphate (DHAP) to sn-glycerol 3-phosphate (G3P), the key precursor for phospholipid synthesis. This chain is Glycerol-3-phosphate dehydrogenase [NAD(P)+], found in Chlamydia felis (strain Fe/C-56) (Chlamydophila felis).